The sequence spans 346 residues: UDP-3-O-acylglucosamine N-acyltransferase (346 aa).

The active-site Proton acceptor is the His-240.

This sequence belongs to the transferase hexapeptide repeat family. LpxD subfamily. In terms of assembly, homotrimer.

It carries out the reaction a UDP-3-O-[(3R)-3-hydroxyacyl]-alpha-D-glucosamine + a (3R)-hydroxyacyl-[ACP] = a UDP-2-N,3-O-bis[(3R)-3-hydroxyacyl]-alpha-D-glucosamine + holo-[ACP] + H(+). It participates in bacterial outer membrane biogenesis; LPS lipid A biosynthesis. Functionally, catalyzes the N-acylation of UDP-3-O-acylglucosamine using 3-hydroxyacyl-ACP as the acyl donor. Is involved in the biosynthesis of lipid A, a phosphorylated glycolipid that anchors the lipopolysaccharide to the outer membrane of the cell. In Bacteroides thetaiotaomicron (strain ATCC 29148 / DSM 2079 / JCM 5827 / CCUG 10774 / NCTC 10582 / VPI-5482 / E50), this protein is UDP-3-O-acylglucosamine N-acyltransferase.